Consider the following 391-residue polypeptide: Somatostatin receptor type 1 (391 aa).

Over residues 1-11 the composition is skewed to low complexity; sequence MFPNGTASSPS. Residues 1–49 are disordered; sequence MFPNGTASSPSSPSPSPGSCGEGGGSRGPGAGAADGMEEPGRNASQNGT. Over 1 to 55 the chain is Extracellular; the sequence is MFPNGTASSPSSPSPSPGSCGEGGGSRGPGAGAADGMEEPGRNASQNGTLSEGQG. N4 carries N-linked (GlcNAc...) asparagine glycosylation. Positions 20–33 are enriched in gly residues; it reads CGEGGGSRGPGAGA. N-linked (GlcNAc...) asparagine glycans are attached at residues N43 and N47. A helical transmembrane segment spans residues 56 to 83; it reads SAILISFIYSVVCLVGLCGNSMVIYVIL. Residues 84–93 lie on the Cytoplasmic side of the membrane; the sequence is RYAKMKTATN. A helical membrane pass occupies residues 94-119; that stretch reads IYILNLAIADELLMLSVPFLVTSTLL. The Extracellular segment spans residues 120–130; that stretch reads RHWPFGALLCR. C129 and C207 are oxidised to a cystine. Residues 131–152 traverse the membrane as a helical segment; the sequence is LVLSVDAVNMFTSIYCLTVLSV. Topologically, residues 153–174 are cytoplasmic; it reads DRYVAVVHPIKAARYRRPTVAK. Residues 175–195 form a helical membrane-spanning segment; that stretch reads VVNLGVWVLSLLVILPIVVFS. Residues 196-218 lie on the Extracellular side of the membrane; sequence RTAANSDGTVACNMLMPEPAQRW. Residues 219-243 traverse the membrane as a helical segment; sequence LVGFVLYTFLMGFLLPVGAICLCYV. Residues 244-269 lie on the Cytoplasmic side of the membrane; that stretch reads LIIAKMRMVALKAGWQQRKRSERKIT. Residues 270–295 form a helical membrane-spanning segment; sequence LMVMMVVMVFVICWMPFYVVQLVNVF. Residues 296-302 lie on the Extracellular side of the membrane; sequence AEQDDAT. Residues 303 to 326 traverse the membrane as a helical segment; it reads VSQLSVILGYANSCANPILYGFLS. The Cytoplasmic segment spans residues 327–391; the sequence is DNFKRSFQRI…GTCTSRITTL (65 aa). Residue C338 is the site of S-palmitoyl cysteine attachment.

This sequence belongs to the G-protein coupled receptor 1 family. As to quaternary structure, interacts with SKB1.

Its subcellular location is the cell membrane. In terms of biological role, receptor for somatostatin with higher affinity for somatostatin-14 than -28. This receptor is coupled via pertussis toxin sensitive G proteins to inhibition of adenylyl cyclase. In addition it stimulates phosphotyrosine phosphatase and Na(+)/H(+) exchanger via pertussis toxin insensitive G proteins. The protein is Somatostatin receptor type 1 (SSTR1) of Canis lupus familiaris (Dog).